A 313-amino-acid chain; its full sequence is Glyoxylate/hydroxypyruvate reductase A (313 aa).

Residue Arg228 is part of the active site. His276 serves as the catalytic Proton donor.

Belongs to the D-isomer specific 2-hydroxyacid dehydrogenase family. GhrA subfamily.

It is found in the cytoplasm. It catalyses the reaction glycolate + NADP(+) = glyoxylate + NADPH + H(+). The enzyme catalyses (R)-glycerate + NAD(+) = 3-hydroxypyruvate + NADH + H(+). The catalysed reaction is (R)-glycerate + NADP(+) = 3-hydroxypyruvate + NADPH + H(+). Catalyzes the NADPH-dependent reduction of glyoxylate and hydroxypyruvate into glycolate and glycerate, respectively. The sequence is that of Glyoxylate/hydroxypyruvate reductase A from Serratia proteamaculans (strain 568).